A 202-amino-acid chain; its full sequence is ATP synthase subunit b 1 (202 aa).

The chain crosses the membrane as a helical span at residues 17 to 37 (IAAVLCFSVLVPLVAMAAEGG).

The protein belongs to the ATPase B chain family. In terms of assembly, F-type ATPases have 2 components, F(1) - the catalytic core - and F(0) - the membrane proton channel. F(1) has five subunits: alpha(3), beta(3), gamma(1), delta(1), epsilon(1). F(0) has three main subunits: a(1), b(2) and c(10-14). The alpha and beta chains form an alternating ring which encloses part of the gamma chain. F(1) is attached to F(0) by a central stalk formed by the gamma and epsilon chains, while a peripheral stalk is formed by the delta and b chains.

It localises to the cell inner membrane. Functionally, f(1)F(0) ATP synthase produces ATP from ADP in the presence of a proton or sodium gradient. F-type ATPases consist of two structural domains, F(1) containing the extramembraneous catalytic core and F(0) containing the membrane proton channel, linked together by a central stalk and a peripheral stalk. During catalysis, ATP synthesis in the catalytic domain of F(1) is coupled via a rotary mechanism of the central stalk subunits to proton translocation. In terms of biological role, component of the F(0) channel, it forms part of the peripheral stalk, linking F(1) to F(0). The chain is ATP synthase subunit b 1 from Syntrophus aciditrophicus (strain SB).